Reading from the N-terminus, the 413-residue chain is Palmitoyltransferase ZDHHC6 (413 aa).

The Cytoplasmic portion of the chain corresponds to 1–24 (MGIFCSVIKFENLQDLRRLCHWGP). The chain crosses the membrane as a helical span at residues 25 to 45 (IIALGVIAICSTMAMIDSVLW). Residues 46–57 (YWPLHTTGGSVN) lie on the Lumenal side of the membrane. Residues 58–78 (FIMLINWTVMILYNYFNAMFA) traverse the membrane as a helical segment. Topologically, residues 79–143 (GPGFVPRGWK…NCCGHQNHAS (65 aa)) are cytoplasmic. Residues 99-149 (QYCKVCQAYKAPRSHHCRKCNRCVMKMDHHCPWINNCCGHQNHASFTLFLL) enclose the DHHC domain. The active-site S-palmitoyl cysteine intermediate is the C129. Residues 144–164 (FTLFLLLAPLGCTHAAFIFVM) form a helical membrane-spanning segment. At 165 to 194 (TMYTQLYNRLSFGWNTVKIDMSAARRDPPP) the chain is on the lumenal side. Residues 195 to 215 (IVPFGLAAFAATLFALGLALG) form a helical membrane-spanning segment. Residues 216 to 413 (TTIAVGMLFF…PAPEGEKKNR (198 aa)) are Cytoplasmic-facing. In terms of domain architecture, SH3 spans 313–398 (VRSVRYKVIE…PRNCVEKCPC (86 aa)). Residues C328, C329, and C343 are each lipidated (S-palmitoyl cysteine). Positions 410–413 (KKNR) match the Di-lysine motif motif.

The protein belongs to the DHHC palmitoyltransferase family. Homooligomerizes. Interacts with SELENOK. In terms of processing, palmitoylated at 3 different sites by ZDHHC16. The combination of the different palmitoylation events strongly affects the quaternary assembly of ZDHHC6, its localization, stability and function. Palmitoylation at Cys-328 accelerates the turnover of ZDHHC6. Depalmitoylated by LYPLA2.

Its subcellular location is the endoplasmic reticulum membrane. It catalyses the reaction L-cysteinyl-[protein] + hexadecanoyl-CoA = S-hexadecanoyl-L-cysteinyl-[protein] + CoA. The catalysed reaction is L-cysteinyl-[protein] + octadecanoyl-CoA = S-octadecanoyl-L-cysteinyl-[protein] + CoA. Functionally, endoplasmic reticulum palmitoyl acyltransferase that mediates palmitoylation of proteins such as AMFR, CALX, ITPR1 and TFRC. Palmitoylates calnexin (CALX), which is required for its association with the ribosome-translocon complex and efficient folding of glycosylated proteins. Mediates palmitoylation of AMFR, promoting AMFR distribution to the peripheral endoplasmic reticulum. Together with SELENOK, palmitoylates ITPR1 in immune cells, leading to regulate ITPR1 stability and function. Stearoyltransferase that mediates stearoylation of TFRC to inhibit TFRC-mediated activation of the JNK pathway and mitochondrial fragmentation. This chain is Palmitoyltransferase ZDHHC6, found in Mus musculus (Mouse).